Here is a 322-residue protein sequence, read N- to C-terminus: MNENKCTDKINNLPKAIFIMGQTAVGKTKIAEILKKKLPVEIISVDSGCIYKGMNIGTDKPNVKKSSSDKYHLIDICEPNDYYSVENFRLDALKIMEKISKKGLIPLLVGGSMFYFKSLLHGLSNLPSYNIENKNLLKKKINEIGWYKSYIFLKKIDPIFASNIHPNDHYRLTRALEIYFSSGNIPTNLFKAKTKKLEYNIRQFSIMISDKKILYKKIKDRFFNMLKNGFKKEVEFLKNKKQINKNMPSMRCIGYKQMLAYLSGEINYKEMILFTISATNKLAKKQSTWLKKWKNINYIYNKDVYISSEEIFNILKKDNFID.

21–28 contacts ATP; the sequence is GQTAVGKT. 23–28 contributes to the substrate binding site; the sequence is TAVGKT. An interaction with substrate tRNA region spans residues 46–49; the sequence is DSGC.

It belongs to the IPP transferase family. As to quaternary structure, monomer. Requires Mg(2+) as cofactor.

The enzyme catalyses adenosine(37) in tRNA + dimethylallyl diphosphate = N(6)-dimethylallyladenosine(37) in tRNA + diphosphate. Its function is as follows. Catalyzes the transfer of a dimethylallyl group onto the adenine at position 37 in tRNAs that read codons beginning with uridine, leading to the formation of N6-(dimethylallyl)adenosine (i(6)A). This Wigglesworthia glossinidia brevipalpis protein is tRNA dimethylallyltransferase.